The sequence spans 526 residues: Delayed-rectifier potassium channel regulatory subunit KCNS1 (526 aa).

At 1–217 (MLMLLVRGTH…LTMENPGYSL (217 aa)) the chain is on the cytoplasmic side. The chain crosses the membrane as a helical span at residues 218-239 (PSKLFSCVSISVVLASIAAMCI). The Extracellular portion of the chain corresponds to 240–270 (HSLPEYQAREAAAAVAAVAAGRSPEGVRDDP). The helical transmembrane segment at 271–293 (VLRRLEYFCIAWFSFEVSSRLLL) threads the bilayer. Topologically, residues 294-304 (APSTRNFFCHP) are cytoplasmic. The helical transmembrane segment at 305-322 (LNLIDIVSVLPFYLTLLA) threads the bilayer. Residues 323-337 (GVALGDQGGKEFGHL) lie on the Extracellular side of the membrane. A helical; Voltage-sensor transmembrane segment spans residues 338–358 (GKVVQVFRLMRIFRVLKLARH). Topologically, residues 359–373 (STGLRSLGATLKHSY) are cytoplasmic. Residues 374–395 (REVGILLLYLAVGVSVFSGVAY) traverse the membrane as a helical segment. Topologically, residues 396–408 (TAEKEEDVGFNTI) are extracellular. Residues 409-420 (PACWWWGTVSMT) constitute an intramembrane region (helical). The short motif at 421–426 (TVGYGD) is the Selectivity filter element. The stretch at 421–428 (TVGYGDVV) is an intramembrane region. Residues 429-435 (PVTVAGK) are Extracellular-facing. A helical membrane pass occupies residues 436–464 (LAASGCILGGILVVALPITIIFNKFSHFY). The Cytoplasmic segment spans residues 465-526 (RRQKALEAAV…PSEPPHPQMY (62 aa)). A disordered region spans residues 491–526 (GVSEASLETSRETSQEGRSADLESQAPSEPPHPQMY). The span at 499 to 511 (TSRETSQEGRSAD) shows a compositional bias: basic and acidic residues.

Belongs to the potassium channel family. S (TC 1.A.1.2) subfamily. Kv9.1/KCNS1 sub-subfamily. As to quaternary structure, heterotetramer with KCNB1. Heterotetramer with KCNB2. Does not form homomultimers.

The protein localises to the cell membrane. In terms of biological role, potassium channel regulatory subunit that modulate the delayed rectifier voltage-gated potassium channel activity of KCNB1 and KCNB2 by altering their kinetics, expression levels, and shifting the half-inactivation potential to more polarized values. While it does not form functional channels on its own, it can form functional heterotetrameric channels with KCNB1 and KCNB2. Each regulatory subunit has unique regulatory properties that can lead to extensive inhibition, significant changes in kinetics, and/or substantial shifts in the voltage dependencies of the inactivation process. The polypeptide is Delayed-rectifier potassium channel regulatory subunit KCNS1 (Pongo abelii (Sumatran orangutan)).